A 386-amino-acid polypeptide reads, in one-letter code: 5-hydroxytryptamine receptor 1B (386 aa).

Residues 1–42 (MEEQGIQCAPPPPAASQTGVPLVNLSHNCSAESHIYQDSIAL) lie on the Extracellular side of the membrane. Asn-24 and Asn-28 each carry an N-linked (GlcNAc...) asparagine glycan. Residues 43–68 (PWKVLLVALLALITLATTLSNAFVIA) form a helical membrane-spanning segment. Residues 69-82 (TVYRTRKLHTPANY) lie on the Cytoplasmic side of the membrane. A helical transmembrane segment spans residues 83-107 (LIASLAVTDLLVSILVMPVSTMYTV). At 108–115 (TGRWTLGQ) the chain is on the extracellular side. The helical transmembrane segment at 116–141 (VVCDFWLSSDITCCTASIMHLCVIAL) threads the bilayer. A disulfide bond links Cys-118 and Cys-195. Ergotamine is bound by residues Asp-125 and Thr-130. The short motif at 142-144 (DRY) is the DRY motif; important for ligand-induced conformation changes and signaling element. Residues 142 to 161 (DRYWAITDAVEYAAKRTPKR) are Cytoplasmic-facing. Residues 162-180 (AAIMIALVWVFSISISLPP) traverse the membrane as a helical segment. Residues 181-201 (FFWRQAKAEEEVLTCLVNTDH) lie on the Extracellular side of the membrane. Position 197 (Val-197) interacts with ergotamine. A helical transmembrane segment spans residues 202 to 225 (VLYTVYSTGGAFYLPTLLLIALYG). At 226–311 (RIYVEARSRI…AARERKATKT (86 aa)) the chain is on the cytoplasmic side. The segment covering 255–268 (DSPGSTTSVTSINS) has biased composition (polar residues). Positions 255–278 (DSPGSTTSVTSINSRAPDLPSESG) are disordered. The chain crosses the membrane as a helical span at residues 312-333 (LGIILGAFIVCWLPFFIISLVM). Residues 334–343 (PICKDACWFH) lie on the Extracellular side of the membrane. A helical transmembrane segment spans residues 344–366 (MATLDFFNWLGYLNSLINPIIYT). The short motif at 361–365 (NPIIY) is the NPxxY motif; important for ligand-induced conformation changes and signaling element. Over 367–386 (MSNEDFKQAFHKLIRFKCAG) the chain is Cytoplasmic. Residue Cys-384 is the site of S-palmitoyl cysteine attachment.

This sequence belongs to the G-protein coupled receptor 1 family. As to quaternary structure, homodimer. Heterodimer with HTR1D. Post-translationally, phosphorylated. Desensitization of the receptor may be mediated by its phosphorylation. In terms of processing, palmitoylated.

The protein localises to the cell membrane. Its function is as follows. G-protein coupled receptor for 5-hydroxytryptamine (serotonin). Also functions as a receptor for ergot alkaloid derivatives, various anxiolytic and antidepressant drugs and other psychoactive substances, such as lysergic acid diethylamide (LSD). Ligand binding causes a conformation change that triggers signaling via guanine nucleotide-binding proteins (G proteins) and modulates the activity of downstream effectors, such as adenylate cyclase. HTR1B is coupled to G(i)/G(o) G alpha proteins and mediates inhibitory neurotransmission by inhibiting adenylate cyclase activity. Arrestin family members inhibit signaling via G proteins and mediate activation of alternative signaling pathways. Regulates the release of 5-hydroxytryptamine, dopamine and acetylcholine in the brain, and thereby affects neural activity, nociceptive processing, pain perception, mood and behavior. Besides, plays a role in vasoconstriction of cerebral arteries. The protein is 5-hydroxytryptamine receptor 1B (HTR1B) of Cricetulus griseus (Chinese hamster).